The primary structure comprises 918 residues: Hexokinase-1 (918 aa).

Met-1 is subject to N-acetylmethionine. Residues 1 to 10 (MIAAQLLAYY) form a mitochondrial-binding peptide (MBP) region. Hexokinase domains lie at 16 to 458 (DDQV…MVTA) and 464 to 906 (AEQH…LITA). Residues Arg-30 and 84 to 89 (DLGGSS) contribute to the ATP site. A hexokinase small subdomain 1 region spans residues 73-207 (DGSEKGDFIA…DYDANIVAVV (135 aa)). 84–88 (DLGGS) contacts D-glucose 6-phosphate. D-glucose-binding positions include Ser-155, 172–173 (TK), and 208–209 (ND). The tract at residues 208-447 (NDTVGTMMTC…SDVRFLLSES (240 aa)) is hexokinase large subdomain 1. The D-glucose 6-phosphate site is built by Asp-209 and Thr-232. D-glucose is bound by residues Asn-235, Glu-260, and 291–294 (QLFE). Position 337 is a phosphoserine (Ser-337). 413–415 (DGS) contributes to the D-glucose 6-phosphate binding site. 425 to 426 (RR) is a binding site for ATP. D-glucose 6-phosphate-binding positions include Thr-449, 532–536 (DLGGT), and Ser-603. Residues 521–655 (DGTEHGDFLA…EFDLDVVAVV (135 aa)) form a hexokinase small subdomain 2 region. ATP is bound at residue 532–537 (DLGGTN). Residues 620-621 (TK) and 656-657 (ND) each bind D-glucose. Positions 656 to 895 (NDTVGTMMTC…CTVSFLLSED (240 aa)) are hexokinase large subdomain 2. Residues Asp-657 and Thr-680 each coordinate D-glucose 6-phosphate. Thr-680 provides a ligand contact to ATP. D-glucose is bound by residues Asn-683, Glu-708, and Glu-742. Residues 747 to 748 (GM), 784 to 788 (TKFLS), and 863 to 867 (TLYKL) contribute to the ATP site. Residues 861–863 (DGT) and Ser-897 contribute to the D-glucose 6-phosphate site.

The protein belongs to the hexokinase family. Monomer. Interacts with RABL2/RABL2A; binds preferentially to GTP-bound RABL2. Interacts with VDAC1. The HK1-VDAC1 complex interacts with ATF2. Interacts (via N-terminal spermatogenic cell-specific region) with PFKM (via C-terminus). Interacts with SMAD5. As to expression, expressed in flagella of epididymal sperm.

Its subcellular location is the mitochondrion outer membrane. The protein localises to the cytoplasm. It localises to the cytosol. It catalyses the reaction a D-hexose + ATP = a D-hexose 6-phosphate + ADP + H(+). It carries out the reaction D-fructose + ATP = D-fructose 6-phosphate + ADP + H(+). The catalysed reaction is D-glucose + ATP = D-glucose 6-phosphate + ADP + H(+). The enzyme catalyses D-mannose + ATP = D-mannose 6-phosphate + ADP + H(+). It catalyses the reaction D-glucosamine + ATP = D-glucosamine 6-phosphate + ADP + H(+). It functions in the pathway carbohydrate metabolism; hexose metabolism. Its pathway is carbohydrate degradation; glycolysis; D-glyceraldehyde 3-phosphate and glycerone phosphate from D-glucose: step 1/4. Its activity is regulated as follows. Hexokinase is an allosteric enzyme inhibited by its product D-glucose 6-phosphate. Hexokinase activity is inhibited by N-acetyl-D-glucosamine. Catalyzes the phosphorylation of various hexoses, such as D-glucose, D-glucosamine, D-fructose, D-mannose and 2-deoxy-D-glucose, to hexose 6-phosphate (D-glucose 6-phosphate, D-glucosamine 6-phosphate, D-fructose 6-phosphate, D-mannose 6-phosphate and 2-deoxy-D-glucose 6-phosphate, respectively). Mediates the initial step of glycolysis by catalyzing phosphorylation of D-glucose to D-glucose 6-phosphate. Involved in innate immunity and inflammation by acting as a pattern recognition receptor for bacterial peptidoglycan. When released in the cytosol, N-acetyl-D-glucosamine component of bacterial peptidoglycan inhibits the hexokinase activity of HK1 and causes its dissociation from mitochondrial outer membrane, thereby activating the NLRP3 inflammasome. This chain is Hexokinase-1, found in Rattus norvegicus (Rat).